We begin with the raw amino-acid sequence, 503 residues long: Serine/threonine-protein kinase chk-1 (503 aa).

Positions 24–286 (YRVVQTLGEG…IEQIQADPWY (263 aa)) constitute a Protein kinase domain. ATP-binding positions include 30-38 (LGEGAFGEV) and Lys54. Residue Asp150 is the Proton acceptor of the active site. Positions 320-346 (SAKRRHLETPNEKSTLAERQNASFSQP) are disordered. Residues 331-346 (EKSTLAERQNASFSQP) are compositionally biased toward polar residues. At Ser344 the chain carries Phosphoserine.

Belongs to the protein kinase superfamily. CAMK Ser/Thr protein kinase family. NIM1 subfamily. In terms of tissue distribution, expressed in the germline.

The protein localises to the cytoplasm. Its subcellular location is the nucleus. The protein resides in the perinuclear region. The catalysed reaction is L-seryl-[protein] + ATP = O-phospho-L-seryl-[protein] + ADP + H(+). The enzyme catalyses L-threonyl-[protein] + ATP = O-phospho-L-threonyl-[protein] + ADP + H(+). Its function is as follows. Serine/threonine-protein kinase which is required for checkpoint-mediated cell cycle arrest and activation of DNA repair in response to the presence of DNA damage or unreplicated DNA. May also negatively regulate cell cycle progression during unperturbed cell cycles. Required for checkpoint mediated cell cycle arrest in response to DNA damage in germline cells. Delays cell-cycle reentry of the Z2 and Z3 primordial germ cells in response to transcription-induced DNA damage as they emerge from cell cycle arrest in L1 larvae. Essential for embryogenesis. This is Serine/threonine-protein kinase chk-1 from Caenorhabditis elegans.